We begin with the raw amino-acid sequence, 760 residues long: Catalase-peroxidase (760 aa).

Residues 1–22 are disordered; sequence MSQGECPVKKVPNVAGSGTRNT. The tryptophyl-tyrosyl-methioninium (Trp-Tyr) (with M-268) cross-link spans 93-242; sequence WHSAGTYRVT…LAAAHMGLIY (150 aa). Residue His-94 is the Proton acceptor of the active site. The tract at residues 206-226 is disordered; that stretch reads KGEGIMDGDQHKTDKSEPHTS. Residues 213–226 show a composition bias toward basic and acidic residues; sequence GDQHKTDKSEPHTS. Positions 242-268 form a cross-link, tryptophyl-tyrosyl-methioninium (Tyr-Met) (with W-93); sequence YVNPEGPEGIPDPVAAAHDIRTTFGRM. A heme b-binding site is contributed by His-283.

It belongs to the peroxidase family. Peroxidase/catalase subfamily. In terms of assembly, homodimer or homotetramer. Requires heme b as cofactor. Post-translationally, formation of the three residue Trp-Tyr-Met cross-link is important for the catalase, but not the peroxidase activity of the enzyme.

The protein localises to the cytoplasm. It carries out the reaction H2O2 + AH2 = A + 2 H2O. The enzyme catalyses 2 H2O2 = O2 + 2 H2O. Bifunctional enzyme with both catalase and broad-spectrum peroxidase activity. The sequence is that of Catalase-peroxidase from Pyrenophora tritici-repentis (strain Pt-1C-BFP) (Wheat tan spot fungus).